Here is a 500-residue protein sequence, read N- to C-terminus: Glycerol kinase (500 aa).

Residue T12 participates in ADP binding. Positions 12, 13, and 14 each coordinate ATP. Residue T12 coordinates sn-glycerol 3-phosphate. R16 lines the ADP pocket. Sn-glycerol 3-phosphate-binding residues include R82, E83, Y134, and D246. R82, E83, Y134, D246, and Q247 together coordinate glycerol. 2 residues coordinate ADP: T268 and G312. ATP-binding residues include T268, G312, Q316, and G413. 2 residues coordinate ADP: G413 and N417.

It belongs to the FGGY kinase family.

The enzyme catalyses glycerol + ATP = sn-glycerol 3-phosphate + ADP + H(+). It participates in polyol metabolism; glycerol degradation via glycerol kinase pathway; sn-glycerol 3-phosphate from glycerol: step 1/1. Inhibited by fructose 1,6-bisphosphate (FBP). Its function is as follows. Key enzyme in the regulation of glycerol uptake and metabolism. Catalyzes the phosphorylation of glycerol to yield sn-glycerol 3-phosphate. The protein is Glycerol kinase of Saccharopolyspora erythraea (strain ATCC 11635 / DSM 40517 / JCM 4748 / NBRC 13426 / NCIMB 8594 / NRRL 2338).